A 184-amino-acid chain; its full sequence is Adenine phosphoribosyltransferase (184 aa).

Belongs to the purine/pyrimidine phosphoribosyltransferase family. In terms of assembly, homodimer.

The protein localises to the cytoplasm. It catalyses the reaction AMP + diphosphate = 5-phospho-alpha-D-ribose 1-diphosphate + adenine. The protein operates within purine metabolism; AMP biosynthesis via salvage pathway; AMP from adenine: step 1/1. Its function is as follows. Catalyzes a salvage reaction resulting in the formation of AMP, that is energically less costly than de novo synthesis. This is Adenine phosphoribosyltransferase from Shewanella baltica (strain OS223).